Consider the following 961-residue polypeptide: Zinc finger protein basonuclin-1 (961 aa).

Residues 210 to 219 are hydrophobic; sequence MTFMLPFQFF. 2 consecutive C2H2-type zinc fingers follow at residues 325 to 348 and 353 to 382; these read VFCT…NAVH and HKCT…PRLH. The interval 370–393 is disordered; that stretch reads RNRHSANPNPRLHMPMNRNNRDKD. The short motif at 501–507 is the Nuclear localization signal element; that stretch reads PKKKSRK. Phosphoserine is present on residues serine 505 and serine 509. The tract at residues 523 to 572 is disordered; that stretch reads EEKRHSLSSDDEVPLQVVSEDEPEDSSPRSDRVPEEQHTQLSLEEPLPQG. Over residues 531-547 the composition is skewed to acidic residues; that stretch reads SDDEVPLQVVSEDEPED. Over residues 548-560 the composition is skewed to basic and acidic residues; that stretch reads SSPRSDRVPEEQH. 2 C2H2-type zinc fingers span residues 687 to 711 and 715 to 743; these read FQCD…NTHA and HACT…SLHQ. Positions 810–864 are disordered; it reads ESYNSGPPSEGTILDLSTTSSMKSESSSHSSWDSDGVSEEGTALMEDSDGNCEGQ. A compositionally biased stretch (low complexity) spans 826-844; that stretch reads STTSSMKSESSSHSSWDSD. 2 C2H2-type zinc fingers span residues 895-918 and 923-950; these read ITCH…KTVH and HKCK…PNLH. The segment at 937 to 961 is disordered; the sequence is VRSRNRHSQNPNLHKSLASSPSHLQ.

As to quaternary structure, interacts with HSF2BP (via C-terminus). Post-translationally, phosphorylation on Ser-505 and Ser-509 leads to cytoplasmic localization. In terms of tissue distribution, epidermis and germ cells of testis and ovary.

It localises to the nucleus. The protein resides in the cytoplasm. The protein localises to the nucleoplasm. Transcriptional activator. It is likely involved in the regulation of keratinocytes terminal differentiation in squamous epithelia and hair follicles. Required for the maintenance of spermatogenesis. It is involved in the positive regulation of oocyte maturation, probably acting through the control of BMP15 levels and regulation of AKT signaling cascade. May also play a role in the early development of embryos. The polypeptide is Zinc finger protein basonuclin-1 (Bnc1) (Mus musculus (Mouse)).